The following is a 198-amino-acid chain: Dynein axonemal light chain 1 (198 aa).

LRR repeat units lie at residues 49–70 (ACKH…SGME), 71–92 (NLRI…DAVA), 94–115 (TLEE…EKLV), and 116–137 (NLRV…DKLA). The region spanning 157-195 (KENNATSEYRIEVVKRLPNLKKLDGMPVDVDEREQANVA) is the LRRCT domain.

Belongs to the dynein light chain LC1-type family. Interacts with OCAD2, a outer arm dynein heavy chain. Interacts with tubulin (previously called p45) located within the A-tubule of the outer doublets in a ATP-independent manner.

It localises to the cytoplasm. Its subcellular location is the cytoskeleton. The protein localises to the flagellum axoneme. In terms of biological role, part of the multisubunit axonemal ATPase complexes that generate the force for flagellar motility and govern beat frequency. Component of the outer arm dynein (ODA). May be involved in a mechanosensory feedback mechanism controlling ODA activity based on external conformational cues by tethering the outer arm dynein heavy chain (ODA2) to the A-tubule of the outer doublet microtubules within the axoneme. The protein is Dynein axonemal light chain 1 of Chlamydomonas reinhardtii (Chlamydomonas smithii).